The sequence spans 879 residues: Metabotropic glutamate receptor 3 (879 aa).

Residues 1–22 (MKMLTRLQILMLALFSKGFLLS) form the signal peptide. Residues 23–576 (LGDHNFMRRE…EDYIKWEDAW (554 aa)) are Extracellular-facing. Cys57 and Cys99 form a disulfide bridge. L-glutamate is bound by residues Arg68, Ser151, and 172–174 (AST). N-linked (GlcNAc...) asparagine glycosylation is present at Asn209. L-glutamate is bound at residue Tyr222. 7 disulfide bridges follow: Cys240–Cys527, Cys361–Cys373, Cys412–Cys419, Cys509–Cys528, Cys513–Cys531, Cys534–Cys546, and Cys549–Cys562. N-linked (GlcNAc...) asparagine glycosylation occurs at Asn292. Asp301 serves as a coordination point for L-glutamate. Residue Lys389 coordinates L-glutamate. N-linked (GlcNAc...) asparagine glycans are attached at residues Asn414 and Asn439. A helical transmembrane segment spans residues 577–599 (AIGPVTIACLGFLCTCIVITVFI). The Cytoplasmic portion of the chain corresponds to 600–613 (KHNNTPLVKASGRE). A helical membrane pass occupies residues 614 to 634 (LCYILLFGVSLSYCMTFFFIA). Residues 635-645 (KPSPVICALRR) are Extracellular-facing. The chain crosses the membrane as a helical span at residues 646-664 (LGLGTSFAICYSALLTKTN). The Cytoplasmic portion of the chain corresponds to 665–688 (CIARIFDGVKNGAQRPKFISPSSQ). Residues 689-709 (VFICLGLILVQIVMVSVWLIL) traverse the membrane as a helical segment. The Extracellular segment spans residues 710-734 (ETPGTRRYTLPEKRETVILKCNVKD). The helical transmembrane segment at 735–756 (SSMLISLTYDVVLVILCTVYAF) threads the bilayer. The Cytoplasmic segment spans residues 757 to 769 (KTRKCPENFNEAK). A helical transmembrane segment spans residues 770 to 792 (FIGFTMYTTCIIWLAFLPIFYVT). At 793–802 (SSDYRVQTTT) the chain is on the extracellular side. Residues 803–828 (MCISVSLSGFVVLGCLFAPKVHIVLF) form a helical membrane-spanning segment. Residues 829 to 879 (QPQKNVVTHRLHLNRFSVSGTATTYSQSSASTYVPTVCNGREVLDSTTSSL) are Cytoplasmic-facing.

This sequence belongs to the G-protein coupled receptor 3 family. In terms of assembly, interacts with TAMALIN. As to expression, is widely distributed in the CNS. Predominant expression is seen in the neuronal cells of the cerebral cortex, dentate gyrus, and glial cells throughout brain regions.

The protein resides in the cell membrane. Functionally, G-protein coupled receptor for glutamate. Ligand binding causes a conformation change that triggers signaling via guanine nucleotide-binding proteins (G proteins) and modulates the activity of down-stream effectors. Signaling inhibits adenylate cyclase activity. This Rattus norvegicus (Rat) protein is Metabotropic glutamate receptor 3 (Grm3).